Reading from the N-terminus, the 265-residue chain is Polyprenol monophosphomannose synthase (265 aa).

Positions 1–10 are enriched in basic and acidic residues; that stretch reads MSVPGEREQG. The tract at residues 1-21 is disordered; sequence MSVPGEREQGAGEDPATVRPT.

Belongs to the glycosyltransferase 2 family. In terms of assembly, interacts with Lnt (also called Ppm2, AC A0QZ13) upon coexpression in E.coli, which increases the PPM synthase activity of this protein.

Its subcellular location is the cytoplasm. The catalysed reaction is a di-trans,poly-cis-dolichyl phosphate + GDP-alpha-D-mannose = a di-trans,poly-cis-dolichyl beta-D-mannosyl phosphate + GDP. Its function is as follows. Transfers mannose from GDP-mannose to lipid acceptors to form polyprenol monophosphomannose (PPM); catalytic activity in vitro is enhanced by Lnt (AC A0QZ13). PMM is an alkai-stable sugar donor which adds mannose-phosphate residues to triacylated-PIM2, eventually leading to generation of the cell wall glycolipid lipoglycan modulins lipoarabinomannan (LAM) and lipomannan (LM). In Mycolicibacterium smegmatis (strain ATCC 700084 / mc(2)155) (Mycobacterium smegmatis), this protein is Polyprenol monophosphomannose synthase.